We begin with the raw amino-acid sequence, 291 residues long: 3-hydroxy-5-phosphonooxypentane-2,4-dione thiolase (291 aa).

Lysine 203 acts as the Schiff-base intermediate with substrate in catalysis.

The protein belongs to the DeoC/FbaB aldolase family. Homodecamer.

The protein resides in the cytoplasm. It carries out the reaction dihydroxyacetone phosphate + acetyl-CoA = 3-hydroxy-2,4-dioxopentyl phosphate + CoA. Functionally, involved in the degradation of phospho-AI-2, thereby terminating induction of the lsr operon and closing the AI-2 signaling cycle. Catalyzes the transfer of an acetyl moiety from 3-hydroxy-5-phosphonooxypentane-2,4-dione to CoA to form glycerone phosphate and acetyl-CoA. The polypeptide is 3-hydroxy-5-phosphonooxypentane-2,4-dione thiolase (Salmonella paratyphi A (strain ATCC 9150 / SARB42)).